The chain runs to 263 residues: Glucosamine-6-phosphate deaminase (263 aa).

The active-site Proton acceptor; for enolization step is D72. Catalysis depends on D141, which acts as the For ring-opening step. The active-site Proton acceptor; for ring-opening step is H143. Catalysis depends on E148, which acts as the For ring-opening step.

This sequence belongs to the glucosamine/galactosamine-6-phosphate isomerase family. NagB subfamily.

It catalyses the reaction alpha-D-glucosamine 6-phosphate + H2O = beta-D-fructose 6-phosphate + NH4(+). The protein operates within amino-sugar metabolism; N-acetylneuraminate degradation; D-fructose 6-phosphate from N-acetylneuraminate: step 5/5. With respect to regulation, allosterically activated by N-acetylglucosamine 6-phosphate (GlcNAc6P). Functionally, catalyzes the reversible isomerization-deamination of glucosamine 6-phosphate (GlcN6P) to form fructose 6-phosphate (Fru6P) and ammonium ion. This chain is Glucosamine-6-phosphate deaminase, found in Porphyromonas gingivalis (strain ATCC BAA-308 / W83).